We begin with the raw amino-acid sequence, 532 residues long: MPTPFRDLHNKSNASASSYETAWSSSFSSRRSTNNDSKSNLKEIKDEPISNLDESISILENNISMMSVSSPTPAYRTPARVIAREAPMTPGDRLLQKIEKEDERDMLRQLYPEMFDSNQKPRQKPKEVKKALKVESLSDYENDDKENVPPCGKPSKEKEEKKQRTKKIVISSDSEDDGNFENYLKTLREKPTEPAKPERKIPVKKDFVVDDDYISEESSEEESEEEEEDVDDEEYRESSPEVEAKISYSDRKQKKRPTDEEEWFLLSLSEKFSGPIHEDAKVYIKETSLRYKKHRESLLTRLQDILVRRIFSAIPSEKLKVIWNARLRKSAGQCRNHSNGNSTVEMSPVVCTTAERVRDTLIHELCHAATWVVDRLHKEGHGPGWKRWGARCSSVFKSLPFIERCHSYEIEAKFFYVCEKDGCDVEIKRQSKSLDTSRKACGRCFGRFILYRYCRRTNTRIRIEDPKAKPVGPILSNSSKPSPPAPRRIVSEHPEGFKEYSEEHYWKYTAQGLKHSDVMGKLLKEFKELKQL.

Basic and acidic residues predominate over residues 1–10; the sequence is MPTPFRDLHN. Disordered stretches follow at residues 1-50, 84-181, and 213-253; these read MPTP…EPIS, REAP…GNFE, and YISE…DRKQ. Over residues 14–32 the composition is skewed to low complexity; that stretch reads ASASSYETAWSSSFSSRRS. 3 stretches are compositionally biased toward basic and acidic residues: residues 39-48, 94-107, and 124-133; these read SNLKEIKDEP, LLQK…RDML, and KPKEVKKALK. The segment covering 213–235 has biased composition (acidic residues); sequence YISEESSEEESEEEEEDVDDEEY. Residues 236–251 show a composition bias toward basic and acidic residues; it reads RESSPEVEAKISYSDR. Residues 308–398 enclose the SprT-like domain; that stretch reads RRIFSAIPSE…GARCSSVFKS (91 aa). The interval 468–489 is disordered; it reads AKPVGPILSNSSKPSPPAPRRI.

The protein belongs to the serine-aspartate repeat-containing protein (SDr) family. As to quaternary structure, interacts with top-2; this interaction allows the resolution of topoisomerase II (top-2) DNA-protein cross-links. As to expression, mainly expressed in germ cells and early embryonic, proliferating cells.

It localises to the chromosome. May play a role in DNA-protein cross-links (DPCs) clearance through a SUMO-dependent recruitment to sites of DPCs, ensuring the genomic stability by protecting germ cells and early embryos from various sources of damage. May resolve the topoisomerase II (top-2) DPCs. Limits replication stress and DNA double-strand breaks. This Caenorhabditis elegans protein is Germ cell nuclear acidic-1 protein.